Consider the following 374-residue polypeptide: N5-carboxyaminoimidazole ribonucleotide synthase (374 aa).

Residues Arg-108, Lys-148, 153-159 (GYDGKGQ), 183-186 (EQFL), Glu-191, His-214, and 266-267 (NE) contribute to the ATP site. Residues 112–296 (KQTLQKAGSK…QFDTHILAVT (185 aa)) enclose the ATP-grasp domain.

Belongs to the PurK/PurT family. As to quaternary structure, homodimer.

The enzyme catalyses 5-amino-1-(5-phospho-beta-D-ribosyl)imidazole + hydrogencarbonate + ATP = 5-carboxyamino-1-(5-phospho-D-ribosyl)imidazole + ADP + phosphate + 2 H(+). It functions in the pathway purine metabolism; IMP biosynthesis via de novo pathway; 5-amino-1-(5-phospho-D-ribosyl)imidazole-4-carboxylate from 5-amino-1-(5-phospho-D-ribosyl)imidazole (N5-CAIR route): step 1/2. Its function is as follows. Catalyzes the ATP-dependent conversion of 5-aminoimidazole ribonucleotide (AIR) and HCO(3)(-) to N5-carboxyaminoimidazole ribonucleotide (N5-CAIR). The chain is N5-carboxyaminoimidazole ribonucleotide synthase from Staphylococcus haemolyticus (strain JCSC1435).